A 212-amino-acid polypeptide reads, in one-letter code: Thymidylate kinase (212 aa).

10–17 contacts ATP; sequence GLEGAGKS.

It belongs to the thymidylate kinase family.

The enzyme catalyses dTMP + ATP = dTDP + ADP. Its function is as follows. Phosphorylation of dTMP to form dTDP in both de novo and salvage pathways of dTTP synthesis. In Vibrio cholerae serotype O1 (strain ATCC 39541 / Classical Ogawa 395 / O395), this protein is Thymidylate kinase.